The following is a 186-amino-acid chain: MKVKEVAQKIEPKMKKTIEAFQHEIASIRTGKATTTLLDRVKVEAYGQLMPLKQVGNIGVMDVHTLIVQVWDKSMVSATERAIRDANLGLNPSADGQNIRVSIPPLTEERRKEFVKLTKKFGEDSKVSLRNLRRDMIHDIEKLEKDKAISEDDKNRGKKEADDLLHKFEKQLSDLIALKEKEIMEV.

Belongs to the RRF family.

The protein localises to the cytoplasm. In terms of biological role, responsible for the release of ribosomes from messenger RNA at the termination of protein biosynthesis. May increase the efficiency of translation by recycling ribosomes from one round of translation to another. The sequence is that of Ribosome-recycling factor from Chlorobium limicola (strain DSM 245 / NBRC 103803 / 6330).